Consider the following 430-residue polypeptide: MGQSVVVLGAQWGDEGKGKIVDLLTEEIGAVVRFQGGHNAGHTLVINGKKTVLHLIPSGILRDDALCLIGNGVVISPAALQKEIAELETSGVEVRSRLKISPAAPLIMPYHIALDQARERAAGGKAIGTTGRGIGPAYEDKVARRGIRIADLHYPKQLEELLRTALDYHNFVLTNYLKTDAVDFQKTFDEALAFGEYVQPMKSDVAGILHDLRKQGKRVLFEGAQGALLDIDHGTYPYVTSSNTTVGGALAGAGVGADSIDYVLGIAKAYATRVGGGPFPTELDDEIGQGIRDRGAEYGASTGRPRRCGWMDIVALKRAVAINGISGLCITKLDVLDGMEKLKVCIAYEYNGKRTEYAPLDAQGWEECTPVYLEFPGWTENTHGITNWDDLPPAARAYLRSLEELAGCPISIVSTGPDRDHTMVLQDPFA.

GTP contacts are provided by residues 13-19 and 41-43; these read GDEGKGK and GHT. The active-site Proton acceptor is the aspartate 14. Mg(2+) is bound by residues aspartate 14 and glycine 41. IMP contacts are provided by residues 14–17, 39–42, threonine 130, arginine 144, glutamine 225, threonine 240, and arginine 304; these read DEGK and NAGH. Histidine 42 (proton donor) is an active-site residue. 300–306 is a binding site for substrate; sequence ASTGRPR. Residues arginine 306, 332–334, and 414–416 contribute to the GTP site; these read KLD and STG.

This sequence belongs to the adenylosuccinate synthetase family. As to quaternary structure, homodimer. Mg(2+) serves as cofactor.

The protein localises to the cytoplasm. The enzyme catalyses IMP + L-aspartate + GTP = N(6)-(1,2-dicarboxyethyl)-AMP + GDP + phosphate + 2 H(+). It functions in the pathway purine metabolism; AMP biosynthesis via de novo pathway; AMP from IMP: step 1/2. Plays an important role in the de novo pathway of purine nucleotide biosynthesis. Catalyzes the first committed step in the biosynthesis of AMP from IMP. The polypeptide is Adenylosuccinate synthetase (Stenotrophomonas maltophilia (strain R551-3)).